A 266-amino-acid polypeptide reads, in one-letter code: Glucosamine-6-phosphate deaminase (266 aa).

Asp-72 serves as the catalytic Proton acceptor; for enolization step. Residue Asp-141 is the For ring-opening step of the active site. Catalysis depends on His-143, which acts as the Proton acceptor; for ring-opening step. Residue Glu-148 is the For ring-opening step of the active site.

Belongs to the glucosamine/galactosamine-6-phosphate isomerase family. NagB subfamily. In terms of assembly, homohexamer.

The catalysed reaction is alpha-D-glucosamine 6-phosphate + H2O = beta-D-fructose 6-phosphate + NH4(+). It participates in amino-sugar metabolism; N-acetylneuraminate degradation; D-fructose 6-phosphate from N-acetylneuraminate: step 5/5. Allosterically activated by N-acetylglucosamine 6-phosphate (GlcNAc6P). Its function is as follows. Catalyzes the reversible isomerization-deamination of glucosamine 6-phosphate (GlcN6P) to form fructose 6-phosphate (Fru6P) and ammonium ion. This is Glucosamine-6-phosphate deaminase from Edwardsiella ictaluri (strain 93-146).